Reading from the N-terminus, the 338-residue chain is Ketol-acid reductoisomerase (NADP(+)) (338 aa).

Positions 1-181 (MKVYYDKDAD…GGTKGGVIET (181 aa)) constitute a KARI N-terminal Rossmann domain. Residues 24-27 (YGSQ), R47, and S52 each bind NADP(+). H107 is an active-site residue. G133 serves as a coordination point for NADP(+). Positions 182–327 (NFREETETDL…GQLRDMMPWI (146 aa)) constitute a KARI C-terminal knotted domain. D190, E194, E226, and E230 together coordinate Mg(2+). S251 is a substrate binding site.

The protein belongs to the ketol-acid reductoisomerase family. Mg(2+) serves as cofactor.

The catalysed reaction is (2R)-2,3-dihydroxy-3-methylbutanoate + NADP(+) = (2S)-2-acetolactate + NADPH + H(+). It catalyses the reaction (2R,3R)-2,3-dihydroxy-3-methylpentanoate + NADP(+) = (S)-2-ethyl-2-hydroxy-3-oxobutanoate + NADPH + H(+). It functions in the pathway amino-acid biosynthesis; L-isoleucine biosynthesis; L-isoleucine from 2-oxobutanoate: step 2/4. The protein operates within amino-acid biosynthesis; L-valine biosynthesis; L-valine from pyruvate: step 2/4. Involved in the biosynthesis of branched-chain amino acids (BCAA). Catalyzes an alkyl-migration followed by a ketol-acid reduction of (S)-2-acetolactate (S2AL) to yield (R)-2,3-dihydroxy-isovalerate. In the isomerase reaction, S2AL is rearranged via a Mg-dependent methyl migration to produce 3-hydroxy-3-methyl-2-ketobutyrate (HMKB). In the reductase reaction, this 2-ketoacid undergoes a metal-dependent reduction by NADPH to yield (R)-2,3-dihydroxy-isovalerate. The protein is Ketol-acid reductoisomerase (NADP(+)) of Aromatoleum aromaticum (strain DSM 19018 / LMG 30748 / EbN1) (Azoarcus sp. (strain EbN1)).